We begin with the raw amino-acid sequence, 67 residues long: MARITVEDCLKQIPNRFELALAATYRARQLVQGHTPKVDAKDKPTVTALREIASGQVGIEMLKKVPS.

It belongs to the RNA polymerase subunit omega family. The RNAP catalytic core consists of 2 alpha, 1 beta, 1 beta' and 1 omega subunit. When a sigma factor is associated with the core the holoenzyme is formed, which can initiate transcription.

The catalysed reaction is RNA(n) + a ribonucleoside 5'-triphosphate = RNA(n+1) + diphosphate. Functionally, promotes RNA polymerase assembly. Latches the N- and C-terminal regions of the beta' subunit thereby facilitating its interaction with the beta and alpha subunits. The chain is DNA-directed RNA polymerase subunit omega from Ralstonia pickettii (strain 12J).